A 175-amino-acid chain; its full sequence is NADH-ubiquinone oxidoreductase chain 6 (175 aa).

5 consecutive transmembrane segments (helical) span residues 1 to 21 (MMTY…VSFS), 25 to 45 (SPIY…GIVL), 47 to 67 (FGGS…MLVV), 88 to 108 (AVLA…CYIL), and 149 to 169 (YGTW…LVIM).

The protein belongs to the complex I subunit 6 family. In terms of assembly, core subunit of respiratory chain NADH dehydrogenase (Complex I) which is composed of 45 different subunits.

It localises to the mitochondrion inner membrane. The catalysed reaction is a ubiquinone + NADH + 5 H(+)(in) = a ubiquinol + NAD(+) + 4 H(+)(out). Core subunit of the mitochondrial membrane respiratory chain NADH dehydrogenase (Complex I) which catalyzes electron transfer from NADH through the respiratory chain, using ubiquinone as an electron acceptor. Essential for the catalytic activity and assembly of complex I. The sequence is that of NADH-ubiquinone oxidoreductase chain 6 (MT-ND6) from Felis catus (Cat).